The following is a 135-amino-acid chain: uncharacterized protein (135 aa).

Residues 68-135 (DEVDNYIRVF…KKESEDEDEL (68 aa)) are a coiled coil. Positions 88–135 (EKIVGKPPKSTSAPDIDELEEEPDEETEEKSEEKTEKKKKESEDEDEL) are disordered. Acidic residues predominate over residues 102 to 117 (DIDELEEEPDEETEEK). Residues 118–129 (SEEKTEKKKKES) show a composition bias toward basic and acidic residues.

This is an uncharacterized protein from Acidianus hospitalis (AFV-1).